We begin with the raw amino-acid sequence, 385 residues long: Basigin (385 aa).

The N-terminal stretch at Met-1–Gly-21 is a signal peptide. The 84-residue stretch at Gly-37–Thr-120 folds into the Ig-like domain. Cystine bridges form between Cys-44–Cys-108, Cys-157–Cys-203, and Cys-242–Cys-301. Residues Glu-138 to Gly-219 enclose the Ig-like C2-type domain. Residues Glu-138 to Ala-323 lie on the Extracellular side of the membrane. The N-linked (GlcNAc...) asparagine glycan is linked to Asn-160. The essential for interaction with KDR/VEGFR2 stretch occupies residues Asp-195–Gly-199. One can recognise an Ig-like V-type domain in the interval Pro-221 to Thr-315. 2 N-linked (GlcNAc...) asparagine glycosylation sites follow: Asn-268 and Asn-302. A helical membrane pass occupies residues Ala-324–Ile-344. Over Tyr-345–Ser-385 the chain is Cytoplasmic. Residues Asp-353 to Ser-385 form a disordered region. 2 positions are modified to phosphoserine: Ser-362 and Ser-368.

Homooligomer. Interacts with NXNL1. Interacts with SLC2A1 and SLC16A1/GLUT1. Interacts with XKR8; promoting its localization at the cell membrane. In terms of assembly, (Microbial infection) Interacts with P.falciparum (isolate 3D7) RH5/PfRH5; the interaction is required for the invasion of the host erythrocytes by the parasite at the merozoite stage. As to quaternary structure, homooligomer. Forms heterooligomers with isoform 3. Interacts with VEGFA and KDR/VEGFR2. Interacts with PPIA/CYPA. Interacts with PPIL2; regulates BSG transport to the cell membrane. Interacts with SLC16A1; interaction mediates SLC16A3 targeting to the plasma membrane. Interacts with SLC16A12. Interacts with SLC16A11. Interacts with AJAP1. Interacts with SLC1A3, ATP1B2, MAG and L1CAM. Interacts with SLC16A3; interaction mediates SLC16A3 targeting to the plasma membrane. (Microbial infection) Interacts with P.falciparum (isolates 3D7 or 7G8) RH5/PfRH5; the interaction is required for the invasion of the host erythrocytes by the parasite at the merozoite stage. In terms of assembly, (Microbial infection) Does not interact with severe acute respiratory syndrome coronavirus 2 (SARS-CoV-2) spike glycoprotein, even if previous works were based on a putative interaction. As to quaternary structure, forms heterooligomers with isoform 2. Interacts with SLC16A6; this interaction mediates targeting to the plasma membrane. Post-translationally, N-glycosylated. Retina-specific. Expressed in retinal cone photoreceptors (at protein level). As to expression, expressed in erythrocytes (at protein level). Highly expressed in melanoma cell lines (at protein level). Highly expressed in the heart, kidney, skeletal muscle and testis. In terms of tissue distribution, highly expressed in the bone marrow, fetal liver, lung, testis and thymus.

Its subcellular location is the melanosome. It localises to the cell membrane. The protein localises to the photoreceptor inner segment. It is found in the cell projection. The protein resides in the cilium. Its subcellular location is the photoreceptor outer segment. It localises to the endosome. The protein localises to the endoplasmic reticulum membrane. It is found in the basolateral cell membrane. Its function is as follows. Essential for normal retinal maturation and development. Acts as a retinal cell surface receptor for NXNL1 and plays an important role in NXNL1-mediated survival of retinal cone photoreceptors. In association with glucose transporter SLC16A1/GLUT1 and NXNL1, promotes retinal cone survival by enhancing aerobic glycolysis and accelerating the entry of glucose into photoreceptors. May act as a potent stimulator of IL6 secretion in multiple cell lines that include monocytes. Functionally, (Microbial infection) Erythrocyte receptor for P.falciparum RH5 which is essential for erythrocyte invasion by the merozoite stage of P.falciparum isolates 3D7 and Dd2. Signaling receptor for cyclophilins, essential for PPIA/CYPA and PPIB/CYPB-dependent signaling related to chemotaxis and adhesion of immune cells. Plays an important role in targeting monocarboxylate transporters SLC16A1/GLUT1, SLC16A11 and SLC16A12 to the plasma membrane. Acts as a coreceptor for vascular endothelial growth factor receptor 2 (KDR/VEGFR2) in endothelial cells enhancing its VEGFA-mediated activation and downstream signaling. Promotes angiogenesis through EPAS1/HIF2A-mediated up-regulation of VEGFA (isoform VEGF-165 and VEGF-121) and KDR/VEGFR2 in endothelial cells. Plays a key role in regulating tumor growth, invasion, metastasis and neoangiogenesis by stimulating the production and release of extracellular matrix metalloproteinases and KDR/VEGFR2 by both tumor cells and stromal cells (fibroblasts and endothelial cells). In terms of biological role, (Microbial infection) Erythrocyte receptor for P.falciparum RH5 which is essential for erythrocyte invasion by the merozoite stage of P.falciparum isolates 3D7, Dd2, 7G8 and HB3. Binding of P.falciparum RH5 results in BSG dimerization which triggers an increase in intracellular Ca(2+) in the erythrocyte. This essential step leads to a rearrangement of the erythrocyte cytoskeleton required for the merozoite invasion. Its function is as follows. (Microbial infection) Can facilitate human SARS coronavirus (SARS-CoV-1) infection via its interaction with virus-associated PPIA/CYPA. Functionally, (Microbial infection) Can facilitate HIV-1 infection via its interaction with virus-associated PPIA/CYPA. (Microbial infection) First described as a receptor for severe acute respiratory syndrome coronavirus 2 (SARS-CoV-2), it is not required for SARS-CoV-2 infection. In terms of biological role, (Microbial infection) Acts as a receptor for measles virus. Its function is as follows. (Microbial infection) Promotes entry of pentamer-expressing human cytomegalovirus (HCMV) into epithelial and endothelial cells. The chain is Basigin from Homo sapiens (Human).